The chain runs to 21 residues: Snake venom serine protease jerdonase (21 aa).

In terms of domain architecture, Peptidase S1 spans 1 to 21; the sequence is IIGGDECNINEHPFLVALYDA.

This sequence belongs to the peptidase S1 family. Snake venom subfamily. As to quaternary structure, monomer. In terms of processing, glycosylated; contains 35.8% neutral carbohydrate. As to expression, expressed by the venom gland.

Its subcellular location is the secreted. Inhibited by PMSF and soybean trypsin inhibitor. Partially inhibited by L-cysteine and DTT. Not affected by EDTA. In terms of biological role, multifunctional venom serine protease that has fibrino(geno)lytic activity towards the A alpha-chain of human fibrinogen (FGA) and a slow activity towards the B beta-chain (FGB). Also hydrolyzes bovine low-molecular-mass kininogen and releases bradykinin. Catalyzes the hydrolysis of BAEE, S-2238 and S-2302. This is Snake venom serine protease jerdonase from Protobothrops jerdonii (Jerdon's pitviper).